Reading from the N-terminus, the 393-residue chain is NAD(P)H-quinone oxidoreductase subunit H 1 (393 aa).

It belongs to the complex I 49 kDa subunit family. In terms of assembly, NDH-1 can be composed of about 15 different subunits; different subcomplexes with different compositions have been identified which probably have different functions.

Its subcellular location is the cell inner membrane. It catalyses the reaction a plastoquinone + NADH + (n+1) H(+)(in) = a plastoquinol + NAD(+) + n H(+)(out). It carries out the reaction a plastoquinone + NADPH + (n+1) H(+)(in) = a plastoquinol + NADP(+) + n H(+)(out). NDH-1 shuttles electrons from an unknown electron donor, via FMN and iron-sulfur (Fe-S) centers, to quinones in the respiratory and/or the photosynthetic chain. The immediate electron acceptor for the enzyme in this species is believed to be plastoquinone. Couples the redox reaction to proton translocation, and thus conserves the redox energy in a proton gradient. Cyanobacterial NDH-1 also plays a role in inorganic carbon-concentration. The sequence is that of NAD(P)H-quinone oxidoreductase subunit H 1 from Gloeobacter violaceus (strain ATCC 29082 / PCC 7421).